The sequence spans 272 residues: Phosphoribosylformylglycinamidine synthase subunit PurQ (272 aa).

The Glutamine amidotransferase type-1 domain maps to 8–272 (VLVMSGYGIN…FKNAVEYFNK (265 aa)). Residue Cys98 is the Nucleophile of the active site. Active-site residues include His225, Glu227, and Glu235.

As to quaternary structure, part of the FGAM synthase complex composed of 1 PurL, 1 PurQ and 2 PurS subunits.

It localises to the cytoplasm. The catalysed reaction is N(2)-formyl-N(1)-(5-phospho-beta-D-ribosyl)glycinamide + L-glutamine + ATP + H2O = 2-formamido-N(1)-(5-O-phospho-beta-D-ribosyl)acetamidine + L-glutamate + ADP + phosphate + H(+). It carries out the reaction L-glutamine + H2O = L-glutamate + NH4(+). The protein operates within purine metabolism; IMP biosynthesis via de novo pathway; 5-amino-1-(5-phospho-D-ribosyl)imidazole from N(2)-formyl-N(1)-(5-phospho-D-ribosyl)glycinamide: step 1/2. Functionally, part of the phosphoribosylformylglycinamidine synthase complex involved in the purines biosynthetic pathway. Catalyzes the ATP-dependent conversion of formylglycinamide ribonucleotide (FGAR) and glutamine to yield formylglycinamidine ribonucleotide (FGAM) and glutamate. The FGAM synthase complex is composed of three subunits. PurQ produces an ammonia molecule by converting glutamine to glutamate. PurL transfers the ammonia molecule to FGAR to form FGAM in an ATP-dependent manner. PurS interacts with PurQ and PurL and is thought to assist in the transfer of the ammonia molecule from PurQ to PurL. This is Phosphoribosylformylglycinamidine synthase subunit PurQ from Methanococcus maripaludis (strain DSM 14266 / JCM 13030 / NBRC 101832 / S2 / LL).